A 160-amino-acid chain; its full sequence is Ribosomal RNA large subunit methyltransferase H (160 aa).

Residues Leu76, Gly108, and Phe127 to Trp132 contribute to the S-adenosyl-L-methionine site.

This sequence belongs to the RNA methyltransferase RlmH family. Homodimer.

Its subcellular location is the cytoplasm. It carries out the reaction pseudouridine(1915) in 23S rRNA + S-adenosyl-L-methionine = N(3)-methylpseudouridine(1915) in 23S rRNA + S-adenosyl-L-homocysteine + H(+). Its function is as follows. Specifically methylates the pseudouridine at position 1915 (m3Psi1915) in 23S rRNA. The polypeptide is Ribosomal RNA large subunit methyltransferase H (Mesorhizobium japonicum (strain LMG 29417 / CECT 9101 / MAFF 303099) (Mesorhizobium loti (strain MAFF 303099))).